The primary structure comprises 329 residues: DNA-directed RNA polymerase subunit alpha (329 aa).

Positions 1–235 (MQGSVTEFLK…EQLDAFVDLR (235 aa)) are alpha N-terminal domain (alpha-NTD). The tract at residues 249-329 (FDPILLRPVD…NWPPASIAED (81 aa)) is alpha C-terminal domain (alpha-CTD).

The protein belongs to the RNA polymerase alpha chain family. In terms of assembly, homodimer. The RNAP catalytic core consists of 2 alpha, 1 beta, 1 beta' and 1 omega subunit. When a sigma factor is associated with the core the holoenzyme is formed, which can initiate transcription.

The catalysed reaction is RNA(n) + a ribonucleoside 5'-triphosphate = RNA(n+1) + diphosphate. Its function is as follows. DNA-dependent RNA polymerase catalyzes the transcription of DNA into RNA using the four ribonucleoside triphosphates as substrates. The chain is DNA-directed RNA polymerase subunit alpha from Mannheimia succiniciproducens (strain KCTC 0769BP / MBEL55E).